A 315-amino-acid polypeptide reads, in one-letter code: Ribosomal RNA small subunit methyltransferase H (315 aa).

The interval 1 to 21 (MNVVNVVPMHLPPPPPRPRGE) is disordered. S-adenosyl-L-methionine-binding positions include 51–53 (GGH), aspartate 69, phenylalanine 96, aspartate 117, and glutamine 124. Positions 281–315 (KKPVTAGDDEVEGNPRARSAKLRAARRVGGAEALA) are disordered.

The protein belongs to the methyltransferase superfamily. RsmH family.

It localises to the cytoplasm. It carries out the reaction cytidine(1402) in 16S rRNA + S-adenosyl-L-methionine = N(4)-methylcytidine(1402) in 16S rRNA + S-adenosyl-L-homocysteine + H(+). Its function is as follows. Specifically methylates the N4 position of cytidine in position 1402 (C1402) of 16S rRNA. This chain is Ribosomal RNA small subunit methyltransferase H, found in Sorangium cellulosum (strain So ce56) (Polyangium cellulosum (strain So ce56)).